Here is an 891-residue protein sequence, read N- to C-terminus: Aconitate hydratase A (891 aa).

3 residues coordinate [4Fe-4S] cluster: C435, C501, and C504.

Belongs to the aconitase/IPM isomerase family. Monomer. The cofactor is [4Fe-4S] cluster.

It carries out the reaction citrate = D-threo-isocitrate. The enzyme catalyses (2S,3R)-3-hydroxybutane-1,2,3-tricarboxylate = 2-methyl-cis-aconitate + H2O. The protein operates within carbohydrate metabolism; tricarboxylic acid cycle; isocitrate from oxaloacetate: step 2/2. It participates in organic acid metabolism; propanoate degradation. In terms of biological role, involved in the catabolism of short chain fatty acids (SCFA) via the tricarboxylic acid (TCA)(acetyl degradation route) and the 2-methylcitrate cycle I (propionate degradation route). Catalyzes the reversible isomerization of citrate to isocitrate via cis-aconitate. Also catalyzes the hydration of 2-methyl-cis-aconitate to yield (2R,3S)-2-methylisocitrate. The (2S,3S)-2-methylcitrate (2-MC) is a very poor substrate. The apo form of AcnA functions as a RNA-binding regulatory protein. In Salmonella typhimurium (strain LT2 / SGSC1412 / ATCC 700720), this protein is Aconitate hydratase A (acnA).